The primary structure comprises 176 residues: GTP-dependent dephospho-CoA kinase (176 aa).

Residues D47, V48, D66, and E125 each coordinate GTP.

This sequence belongs to the GTP-dependent DPCK family.

The catalysed reaction is 3'-dephospho-CoA + GTP = GDP + CoA + H(+). It functions in the pathway cofactor biosynthesis; coenzyme A biosynthesis. Catalyzes the GTP-dependent phosphorylation of the 3'-hydroxyl group of dephosphocoenzyme A to form coenzyme A (CoA). In Methanocella arvoryzae (strain DSM 22066 / NBRC 105507 / MRE50), this protein is GTP-dependent dephospho-CoA kinase.